A 577-amino-acid chain; its full sequence is Proline--tRNA ligase (577 aa).

This sequence belongs to the class-II aminoacyl-tRNA synthetase family. ProS type 1 subfamily. Homodimer.

It localises to the cytoplasm. It carries out the reaction tRNA(Pro) + L-proline + ATP = L-prolyl-tRNA(Pro) + AMP + diphosphate. In terms of biological role, catalyzes the attachment of proline to tRNA(Pro) in a two-step reaction: proline is first activated by ATP to form Pro-AMP and then transferred to the acceptor end of tRNA(Pro). As ProRS can inadvertently accommodate and process non-cognate amino acids such as alanine and cysteine, to avoid such errors it has two additional distinct editing activities against alanine. One activity is designated as 'pretransfer' editing and involves the tRNA(Pro)-independent hydrolysis of activated Ala-AMP. The other activity is designated 'posttransfer' editing and involves deacylation of mischarged Ala-tRNA(Pro). The misacylated Cys-tRNA(Pro) is not edited by ProRS. This is Proline--tRNA ligase from Thermotoga sp. (strain RQ2).